The following is a 149-amino-acid chain: 16.9 kDa class I heat shock protein 3 (149 aa).

The sHSP domain maps to 35-149 (DTAAFANARV…PEVKAIEISG (115 aa)).

It belongs to the small heat shock protein (HSP20) family. In terms of assembly, may form oligomeric structures.

It localises to the cytoplasm. This is 16.9 kDa class I heat shock protein 3 (HSP16.9C) from Oryza sativa subsp. japonica (Rice).